Reading from the N-terminus, the 184-residue chain is NADH-quinone oxidoreductase subunit B (184 aa).

[4Fe-4S] cluster is bound by residues Cys-37, Cys-38, Cys-103, and Cys-132.

Belongs to the complex I 20 kDa subunit family. NDH-1 is composed of 14 different subunits. Subunits NuoB, C, D, E, F, and G constitute the peripheral sector of the complex. [4Fe-4S] cluster is required as a cofactor.

The protein resides in the cell membrane. It carries out the reaction a quinone + NADH + 5 H(+)(in) = a quinol + NAD(+) + 4 H(+)(out). NDH-1 shuttles electrons from NADH, via FMN and iron-sulfur (Fe-S) centers, to quinones in the respiratory chain. The immediate electron acceptor for the enzyme in this species is believed to be a menaquinone. Couples the redox reaction to proton translocation (for every two electrons transferred, four hydrogen ions are translocated across the cytoplasmic membrane), and thus conserves the redox energy in a proton gradient. This is NADH-quinone oxidoreductase subunit B from Nocardioides sp. (strain ATCC BAA-499 / JS614).